A 312-amino-acid chain; its full sequence is Glyoxylate/hydroxypyruvate reductase A (312 aa).

Arg-227 is an active-site residue. Catalysis depends on His-275, which acts as the Proton donor.

This sequence belongs to the D-isomer specific 2-hydroxyacid dehydrogenase family. GhrA subfamily.

The protein localises to the cytoplasm. It catalyses the reaction glycolate + NADP(+) = glyoxylate + NADPH + H(+). The catalysed reaction is (R)-glycerate + NAD(+) = 3-hydroxypyruvate + NADH + H(+). It carries out the reaction (R)-glycerate + NADP(+) = 3-hydroxypyruvate + NADPH + H(+). In terms of biological role, catalyzes the NADPH-dependent reduction of glyoxylate and hydroxypyruvate into glycolate and glycerate, respectively. This is Glyoxylate/hydroxypyruvate reductase A from Salmonella heidelberg (strain SL476).